We begin with the raw amino-acid sequence, 36 residues long: Pancreatic polypeptide (36 aa).

Tyrosine amide is present on tyrosine 36.

The protein belongs to the NPY family.

It localises to the secreted. Hormone secreted by pancreatic cells that acts as a regulator of pancreatic and gastrointestinal functions probably by signaling through the G protein-coupled receptor NPY4R2. In Chinchilla chinchilla (Short-tailed chinchilla), this protein is Pancreatic polypeptide (PPY).